Here is a 461-residue protein sequence, read N- to C-terminus: Ornithine decarboxylase (461 aa).

Lys-69 is subject to N6-(pyridoxal phosphate)lysine. Pyridoxal 5'-phosphate contacts are provided by residues Ser-200, Gly-237, and 274-277 (EPGR). Residue Ser-303 is modified to Phosphoserine; by CK2. 331-332 (YD) provides a ligand contact to substrate. Cys-360 serves as the catalytic Proton donor; shared with dimeric partner. Cys-360 carries the S-nitrosocysteine; in inhibited form modification. Residue Asp-361 coordinates substrate. Tyr-389 is a pyridoxal 5'-phosphate binding site.

It belongs to the Orn/Lys/Arg decarboxylase class-II family. As to quaternary structure, homodimer. Only the dimer is catalytically active, as the active sites are constructed of residues from both monomers. Does not form a heterodimer with AZIN2. The cofactor is pyridoxal 5'-phosphate. In terms of processing, S-Nitrosylation inhibits the enzyme. S-Nitrosylated in vitro on 4 cysteine residues.

The catalysed reaction is L-ornithine + H(+) = putrescine + CO2. The protein operates within amine and polyamine biosynthesis; putrescine biosynthesis via L-ornithine pathway; putrescine from L-ornithine: step 1/1. Inhibited by S-nitrosylation. Inhibited by antizymes (AZs) OAZ1, OAZ2 and OAZ3 in response to polyamine levels. AZs inhibit the assembly of the functional homodimer by binding to ODC monomers. Additionally, OAZ1 targets ODC monomers for ubiquitin-independent proteolytic destruction by the 26S proteasome. Inhibited by 1-amino-oxy-3-aminopropane (APA, an isosteric analog of putrescine). Irreversibly inhibited by alpha-difluoromethylornithine (DFMO). In terms of biological role, catalyzes the first and rate-limiting step of polyamine biosynthesis that converts ornithine into putrescine, which is the precursor for the polyamines, spermidine and spermine. Polyamines are essential for cell proliferation and are implicated in cellular processes, ranging from DNA replication to apoptosis. The protein is Ornithine decarboxylase (ODC1) of Homo sapiens (Human).